Here is a 285-residue protein sequence, read N- to C-terminus: Phosphatidylglycerol--prolipoprotein diacylglyceryl transferase (285 aa).

The next 5 membrane-spanning stretches (helical) occupy residues 17-37, 43-63, 78-98, 113-133, and 139-159; these read ALGLSPIAFDLGVWHLFGLTL, WYALAYITGILLAWRYVLFLL, LVFWSTLGILVGGRLAYVLFY, WEGGMSYHGGMIGVFLAIWWV, and LSWLRIADYIGCAAPIGLFLG. An a 1,2-diacyl-sn-glycero-3-phospho-(1'-sn-glycerol)-binding site is contributed by R160. A run of 3 helical transmembrane segments spans residues 195-215, 223-243, and 256-276; these read LYEAGLEGILLFAFLNYQFFA, GKLAGFFLVGYGLSRFIVEWF, and GLTMGQTLTIPMVIAGLWLII.

Belongs to the Lgt family.

It is found in the cell inner membrane. It catalyses the reaction L-cysteinyl-[prolipoprotein] + a 1,2-diacyl-sn-glycero-3-phospho-(1'-sn-glycerol) = an S-1,2-diacyl-sn-glyceryl-L-cysteinyl-[prolipoprotein] + sn-glycerol 1-phosphate + H(+). The protein operates within protein modification; lipoprotein biosynthesis (diacylglyceryl transfer). Catalyzes the transfer of the diacylglyceryl group from phosphatidylglycerol to the sulfhydryl group of the N-terminal cysteine of a prolipoprotein, the first step in the formation of mature lipoproteins. This is Phosphatidylglycerol--prolipoprotein diacylglyceryl transferase from Zymomonas mobilis subsp. mobilis (strain ATCC 31821 / ZM4 / CP4).